The following is a 132-amino-acid chain: Transcription antitermination protein NusB (132 aa).

This sequence belongs to the NusB family.

Its function is as follows. Involved in transcription antitermination. Required for transcription of ribosomal RNA (rRNA) genes. Binds specifically to the boxA antiterminator sequence of the ribosomal RNA (rrn) operons. The polypeptide is Transcription antitermination protein NusB (Lachnoclostridium phytofermentans (strain ATCC 700394 / DSM 18823 / ISDg) (Clostridium phytofermentans)).